Here is a 1097-residue protein sequence, read N- to C-terminus: DNA-directed RNA polymerase subunit beta (1097 aa).

The tract at residues 1071–1097 (MQDVNPKRNTPSRPTYESLGTSEYAED) is disordered. Polar residues predominate over residues 1077-1091 (KRNTPSRPTYESLGT).

Belongs to the RNA polymerase beta chain family. In cyanobacteria the RNAP catalytic core is composed of 2 alpha, 1 beta, 1 beta', 1 gamma and 1 omega subunit. When a sigma factor is associated with the core the holoenzyme is formed, which can initiate transcription.

It carries out the reaction RNA(n) + a ribonucleoside 5'-triphosphate = RNA(n+1) + diphosphate. DNA-dependent RNA polymerase catalyzes the transcription of DNA into RNA using the four ribonucleoside triphosphates as substrates. The protein is DNA-directed RNA polymerase subunit beta of Prochlorococcus marinus subsp. pastoris (strain CCMP1986 / NIES-2087 / MED4).